A 509-amino-acid polypeptide reads, in one-letter code: Midnolin (509 aa).

A compositionally biased stretch (polar residues) spans Met1 to Ser12. The interval Met1–Pro27 is disordered. The Ubiquitin-like domain maps to Met28–Gly102. Disordered regions lie at residues Gly172–Leu295, Gln370–Pro404, and Lys448–Leu485. Over residues Gly176 to Gly190 the composition is skewed to low complexity. Residues His196–His209 are compositionally biased toward basic residues. Residues Ala220–Pro231 show a composition bias toward pro residues. Positions Pro261–Ala285 are enriched in low complexity. Polar residues predominate over residues Lys286–Leu295. The segment covering Ser376–Pro386 has biased composition (pro residues). Residues His387–Ser400 show a composition bias toward low complexity.

It localises to the nucleus. The protein localises to the cytoplasm. It is found in the cytosol. The protein resides in the nucleolus. Its function is as follows. Facilitates ubiquitin-independent proteasomal degradation of polycomb protein CBX4. Plays a role in inhibiting the activity of glucokinase GCK and both glucose-induced and basal insulin secretion. The polypeptide is Midnolin (midn) (Danio rerio (Zebrafish)).